A 1489-amino-acid chain; its full sequence is MMNFEGCPSDASFGPFVKGCRGDFDFTLKFELIIFFIAPSCVFTALTFVRIFVLVSKSRIMTGNRIPLNLIKNVYSPIQIRENCFSSSQVLGLVAGMTTAALSYYEHWYSRRPSMLLSIYLFLSLLLDIAHDRTLWLNAYSTLEYGFSSVFSAAVAIKAFAVWLESRPLSKLPWGDSHVKETPDSTSGVYSLSSFMWLRGLLRLGYRKVLALSDLPALHGNMLGVVYDRFRKCSVNHFTRAEQSQERGKYKLVHALSTTLTLHLLLPVLPRIALIGLSLAQAFLTQAVLRYLEEDQPHSYSWGLIGATVLIYGGISICTSLYWYFHERLLCLVRGCLASAIFHKTLELSLTSNARSASVTLMSTDIDRIHKGFLNLHELWANIVEAGLAAWFLWRQVGIAFIAPIGLVLLSFLGVSIVGNYVGLYQKAWMGKIQNRVAITANVISNIKHLKVSGMTRPVESIIQNTRESELRASRGTRRLQIASLIIAFAPDLTAPGIMLAATKSQDFSSHKVYTAIALLTLLTVPLGSIFRSVSPLMSAFACLERIQAFLELDTRKDPRLITHSTPDTSSASGDEKVYADPLPMSRSSAVKVIQASFGWQGKEQACLKNINLTVNYSALTAIIGPVGSGKSTLCKALLGETPFSAGKVVLERDASCKVGYCDQTPFIRNCSIKENIVGFSKWNPVRYLEVVEASMLSYDLRELPEGDATIVGSGGMTLSGGQKQRIAIARSLYLDTRLLILDDILSGLDTQTEHHLFQHVLSPNGLLKKRENAPAIVFSTHSVKYARWADHIFLLNEKGEMIEQGSWEELSTYQSHLQSLCIQEKVQMTDLKQLEPVESEQPLDVTMSEIEQTRSSRRGADNQETIASGADSSARQNGDLGVYRHYFRAVPPVAIISFVTSSLSYGFLYSFPNIWLKWWLLDADSTRPHHPKAFWNGIYAMFQILALLSELLTMYLALTYFALISGATVHSSALRAITRAPLYFFASVDLGTITNYFSQDMTLVDGALPASLIQFASDVAASLGMAGNLAASSPYLAASYPLCFFLLYFVTKYYLRTSRQLRLLDLEAKSPLYAHFLELENGIATIRAADWTGEYLVQSRLLLDVSQRPAYLLAMVQRWLLFILNTFVSLLALFTVALVTQLNNHGTGFAGAGLISLMQIGQFLTNVVRSYATLEVSMGAVSRLKALTESPHRECIEGQEVVPPQEWPCRGSIKIDGVSASYDSQNDQVNEKSFSLRELNLHIEAGQKVAICGRTGSGKSSIILLLLHMLRPLRNTREDAITIDGISIQNVDPPILRERIFAVPQDTIFLPQGSSWLENMEPFATNAAECRSVLEDVNLWDVVIAQGGDLTAALDSDTLSQGQRQLFGLARAVLRKRAKAQSMSEPAPQGGLLLLDEPSSAVDFETEGLMHRVIQREFCEYTVIMVTHRLEFITQIHSVGQVSVDTQQGLFDRVLVVDAGTIVEDGHPAQLLESKEGKFRALWEASRV.

Transmembrane regions (helical) follow at residues 33-53 (IIFF…RIFV), 84-104 (CFSS…ALSY), 116-136 (LLSI…RTLW), 143-163 (LEYG…FAVW), 264-284 (LLLP…QAFL), 302-322 (WGLI…TSLY), 373-393 (FLNL…AWFL), 397-417 (VGIA…GVSI), 482-502 (IASL…MLAA), and 511-531 (HKVY…GSIF). The ABC transmembrane type-1 1 domain maps to 272–539 (IALIGLSLAQ…IFRSVSPLMS (268 aa)). The ABC transporter 1 domain occupies 591-823 (VKVIQASFGW…YQSHLQSLCI (233 aa)). Asparagine 612 and asparagine 616 each carry an N-linked (GlcNAc...) asparagine glycan. 625-632 (GPVGSGKS) contributes to the ATP binding site. N-linked (GlcNAc...) asparagine glycosylation occurs at asparagine 670. Over residues 852-862 (EQTRSSRRGAD) the composition is skewed to basic and acidic residues. The disordered stretch occupies residues 852–874 (EQTRSSRRGADNQETIASGADSS). Residues 863 to 874 (NQETIASGADSS) show a composition bias toward polar residues. 6 helical membrane passes run 890 to 910 (AVPP…GFLY), 945 to 965 (ILAL…FALI), 977 to 999 (AITR…NYFS), 1031 to 1051 (AASS…LYFV), 1120 to 1140 (WLLF…VALV), and 1149 to 1169 (GFAG…TNVV). In terms of domain architecture, ABC transmembrane type-1 2 spans 902–1187 (SSLSYGFLYS…SMGAVSRLKA (286 aa)). Residues 1214–1485 (IKIDGVSASY…KEGKFRALWE (272 aa)) form the ABC transporter 2 domain. An ATP-binding site is contributed by 1254–1261 (GRTGSGKS).

The protein belongs to the ABC transporter superfamily. ABCC family. Conjugate transporter (TC 3.A.1.208) subfamily.

It localises to the cell membrane. Functionally, ABC transporter that may provide the dual role of fumonisin export and self-protection by allowing the fungus to evade the harmful effect of its own fumonisin production. Plays a role in the repression of the gene cluster that mediates fumonisin biosynthesis. The chain is ABC transporter FUM19 from Gibberella moniliformis (strain M3125 / FGSC 7600) (Maize ear and stalk rot fungus).